The sequence spans 589 residues: Arginine--tRNA ligase (589 aa).

The 'HIGH' region motif lies at 131-141; it reads ANPTGPLHVGH.

It belongs to the class-I aminoacyl-tRNA synthetase family. Monomer.

The protein resides in the cytoplasm. The enzyme catalyses tRNA(Arg) + L-arginine + ATP = L-arginyl-tRNA(Arg) + AMP + diphosphate. In Legionella pneumophila (strain Paris), this protein is Arginine--tRNA ligase.